The chain runs to 943 residues: Protein translocase subunit SecA (943 aa).

ATP contacts are provided by residues Gln90, 108-112 (GEGKT), and Asp509. The interval 535-560 (PNNEHKPPIPKQRSSKSKGGFSSKVG) is disordered. Residues 551–560 (SKGGFSSKVG) show a composition bias toward low complexity.

Belongs to the SecA family. As to quaternary structure, monomer and homodimer. Part of the essential Sec protein translocation apparatus which comprises SecA, SecYEG and auxiliary proteins SecDF. Other proteins may also be involved.

It localises to the cell inner membrane. Its subcellular location is the cellular thylakoid membrane. The protein resides in the cytoplasm. The catalysed reaction is ATP + H2O + cellular proteinSide 1 = ADP + phosphate + cellular proteinSide 2.. Part of the Sec protein translocase complex. Interacts with the SecYEG preprotein conducting channel. Has a central role in coupling the hydrolysis of ATP to the transfer of proteins into and across the cell membrane, serving as an ATP-driven molecular motor driving the stepwise translocation of polypeptide chains across the membrane. Its function is as follows. Probably participates in protein translocation into and across both the cytoplasmic and thylakoid membranes in cyanobacterial cells. The protein is Protein translocase subunit SecA of Prochlorococcus marinus (strain MIT 9312).